Consider the following 190-residue polypeptide: MSIKSDKWIRRMADQHGMIEPFEANQVKMAADGQKLISYGTSSYGYDIRCADEFKVFTNINSTIVDPKNFDPNSFVEVSGKGYCIIPPNSFALARTVEYFRIPRSVLTVCLGKSTYARCGIIVNVTPFEPEWEGYVTLEFSNTTPLPAKIYANEGVAQVLFFESDEECDVSYKDRAGKYQGQVGVTLPRP.

Residues 113–118 (KSTYAR), 137–139 (TLE), Gln-158, Tyr-172, and Gln-182 each bind dCTP. Residue Glu-139 is the Proton donor/acceptor of the active site.

Belongs to the dCTP deaminase family. In terms of assembly, homotrimer.

It catalyses the reaction dCTP + H2O + H(+) = dUTP + NH4(+). It participates in pyrimidine metabolism; dUMP biosynthesis; dUMP from dCTP (dUTP route): step 1/2. Its function is as follows. Catalyzes the deamination of dCTP to dUTP. The protein is dCTP deaminase of Chromobacterium violaceum (strain ATCC 12472 / DSM 30191 / JCM 1249 / CCUG 213 / NBRC 12614 / NCIMB 9131 / NCTC 9757 / MK).